The chain runs to 216 residues: Small ribosomal subunit protein uS3 (216 aa).

A KH type-2 domain is found at 38–106; the sequence is IRGYLKKKLY…EIIINILEVR (69 aa).

The protein belongs to the universal ribosomal protein uS3 family. In terms of assembly, part of the 30S ribosomal subunit. Forms a tight complex with proteins S10 and S14.

Binds the lower part of the 30S subunit head. Binds mRNA in the 70S ribosome, positioning it for translation. This chain is Small ribosomal subunit protein uS3, found in Syntrophus aciditrophicus (strain SB).